The sequence spans 444 residues: Retinoic acid receptor alpha-A (444 aa).

The segment at 1-71 is modulating; it reads MYESVDVNPF…PPSPPPPPRI (71 aa). The segment covering 35-46 has biased composition (polar residues); it reads SIRHQHWSGSNH. A disordered region spans residues 35–67; it reads SIRHQHWSGSNHSIETQSTSSEEIVPSPPSPPP. Over residues 47 to 58 the composition is skewed to low complexity; that stretch reads SIETQSTSSEEI. The nuclear receptor DNA-binding region spans 72 to 147; sequence YKPCFVCQDK…VGMSKESVRN (76 aa). 2 NR C4-type zinc fingers span residues 75 to 95 and 111 to 130; these read CFVC…CEGC and CHRE…CQYC. The hinge stretch occupies residues 148 to 169; that stretch reads DRNKKKKEEKKPECTENYTLSP. Positions 170-404 constitute an NR LBD domain; that stretch reads DTEQMIDRVR…PLIQEMLENS (235 aa). The 9aaTAD motif lies at 395 to 403; sequence PLIQEMLEN. The tract at residues 402–444 is disordered; sequence ENSEGLESSSGAQGSRASATTPGSCSPSLSPNSAQSSPPTQSP.

The protein belongs to the nuclear hormone receptor family. NR1 subfamily. As to quaternary structure, heterodimer; with an rxr molecule. Binds DNA preferentially as a rar/rxr heterodimer. As to expression, in the embryo, zygotic expression largely overlaps that of rarab, with high levels in hindbrain, lateral mesoderm and tail bud. In the adult, strong expression in brain and muscle, weaker expression in ovary, liver and digestive tract.

The protein resides in the nucleus. Receptor for retinoic acid. Retinoic acid receptors bind as heterodimers to their target response elements in response to their ligands, all-trans or 9-cis retinoic acid, and regulate gene expression in various biological processes. The rar/rxr heterodimers bind to the retinoic acid response elements (RARE) composed of tandem 5'-AGGTCA-3' sites known as DR1-DR5. Required for hindbrain patterning. This Danio rerio (Zebrafish) protein is Retinoic acid receptor alpha-A.